The primary structure comprises 122 residues: Large ribosomal subunit protein uL14 (122 aa).

It belongs to the universal ribosomal protein uL14 family. Part of the 50S ribosomal subunit. Forms a cluster with proteins L3 and L19. In the 70S ribosome, L14 and L19 interact and together make contacts with the 16S rRNA in bridges B5 and B8.

In terms of biological role, binds to 23S rRNA. Forms part of two intersubunit bridges in the 70S ribosome. The polypeptide is Large ribosomal subunit protein uL14 (Cyanothece sp. (strain PCC 7425 / ATCC 29141)).